A 464-amino-acid polypeptide reads, in one-letter code: tRNA modification GTPase MnmE (464 aa).

3 residues coordinate (6S)-5-formyl-5,6,7,8-tetrahydrofolate: R27, E90, and K129. Residues 222–384 (GVTLVLAGSV…LYDKIKTLIS (163 aa)) enclose the TrmE-type G domain. Residues 232 to 237 (NAGKSS), 251 to 257 (SSYPGTT), and 276 to 279 (DTAG) each bind GTP. The Mg(2+) site is built by S236 and T257. (6S)-5-formyl-5,6,7,8-tetrahydrofolate is bound at residue K464.

This sequence belongs to the TRAFAC class TrmE-Era-EngA-EngB-Septin-like GTPase superfamily. TrmE GTPase family. In terms of assembly, homodimer. Heterotetramer of two MnmE and two MnmG subunits. Requires K(+) as cofactor.

It is found in the cytoplasm. Exhibits a very high intrinsic GTPase hydrolysis rate. Involved in the addition of a carboxymethylaminomethyl (cmnm) group at the wobble position (U34) of certain tRNAs, forming tRNA-cmnm(5)s(2)U34. The sequence is that of tRNA modification GTPase MnmE from Borrelia garinii subsp. bavariensis (strain ATCC BAA-2496 / DSM 23469 / PBi) (Borreliella bavariensis).